Reading from the N-terminus, the 379-residue chain is Queuine tRNA-ribosyltransferase (379 aa).

D93 (proton acceptor) is an active-site residue. Substrate contacts are provided by residues D93–F97, D147, Q191, and G218. The tract at residues G249–D255 is RNA binding. D268 (nucleophile) is an active-site residue. The segment at T273–R277 is RNA binding; important for wobble base 34 recognition. C306, C308, C311, and H337 together coordinate Zn(2+).

Belongs to the queuine tRNA-ribosyltransferase family. In terms of assembly, homodimer. Within each dimer, one monomer is responsible for RNA recognition and catalysis, while the other monomer binds to the replacement base PreQ1. Zn(2+) is required as a cofactor.

The enzyme catalyses 7-aminomethyl-7-carbaguanine + guanosine(34) in tRNA = 7-aminomethyl-7-carbaguanosine(34) in tRNA + guanine. Its pathway is tRNA modification; tRNA-queuosine biosynthesis. Functionally, catalyzes the base-exchange of a guanine (G) residue with the queuine precursor 7-aminomethyl-7-deazaguanine (PreQ1) at position 34 (anticodon wobble position) in tRNAs with GU(N) anticodons (tRNA-Asp, -Asn, -His and -Tyr). Catalysis occurs through a double-displacement mechanism. The nucleophile active site attacks the C1' of nucleotide 34 to detach the guanine base from the RNA, forming a covalent enzyme-RNA intermediate. The proton acceptor active site deprotonates the incoming PreQ1, allowing a nucleophilic attack on the C1' of the ribose to form the product. After dissociation, two additional enzymatic reactions on the tRNA convert PreQ1 to queuine (Q), resulting in the hypermodified nucleoside queuosine (7-(((4,5-cis-dihydroxy-2-cyclopenten-1-yl)amino)methyl)-7-deazaguanosine). This chain is Queuine tRNA-ribosyltransferase, found in Mannheimia succiniciproducens (strain KCTC 0769BP / MBEL55E).